The chain runs to 141 residues: Large ribosomal subunit protein uL13 (141 aa).

Belongs to the universal ribosomal protein uL13 family. In terms of assembly, part of the 50S ribosomal subunit.

Its function is as follows. This protein is one of the early assembly proteins of the 50S ribosomal subunit, although it is not seen to bind rRNA by itself. It is important during the early stages of 50S assembly. In Sulfurovum sp. (strain NBC37-1), this protein is Large ribosomal subunit protein uL13.